The following is a 797-amino-acid chain: Speckle targeted PIP5K1A-regulated poly(A) polymerase (797 aa).

The Matrin-type zinc finger occupies 14 to 44 (FHCNLCHVNIPNRPSLEDHVKGKKHLHLLRL). In terms of domain architecture, RRM spans 54–126 (NSVFVSGFKA…LKLRVKPREK (73 aa)). An ATP-binding site is contributed by Ser205. The Mg(2+) site is built by Asp216 and Asp218. Asp216, Asp218, Asn319, Arg341, Tyr363, and His495 together coordinate UTP. Residue Asn319 coordinates ATP. Positions 421 to 495 (DLCTLLFGFF…NVLDPFELNH (75 aa)) constitute a PAP-associated domain. Residues 544–787 (QSEAAASSQP…FLPKMAETIM (244 aa)) are KA1; binds the bulging loops of U6 snRNA but is dispensable for terminal uridylyltransferase activity. The disordered stretch occupies residues 611–659 (EETQSLDKTDKSGSEMEVNNNRSLEDTNIQVKGEAGKKRPLSVEEGPST). Over residues 615–624 (SLDKTDKSGS) the composition is skewed to basic and acidic residues. The span at 627 to 640 (EVNNNRSLEDTNIQ) shows a compositional bias: polar residues.

Belongs to the DNA polymerase type-B-like family. As to quaternary structure, associates with the cleavage and polyadenylation specificity factor (CPSF) complex. It depends on Mg(2+) as a cofactor. Mn(2+) is required as a cofactor.

Its subcellular location is the nucleus. The protein localises to the nucleolus. It localises to the nucleus speckle. The catalysed reaction is RNA(n) + UTP = RNA(n)-3'-uridine ribonucleotide + diphosphate. The enzyme catalyses RNA(n) + ATP = RNA(n)-3'-adenine ribonucleotide + diphosphate. Functionally, poly(A) polymerase that creates the 3'-poly(A) tail of specific pre-mRNAs. In addition to polyadenylation, it is also required for the 3'-end cleavage of pre-mRNAs: binds to the 3'UTR of targeted pre-mRNAs and promotes the recruitment and assembly of the CPSF complex on the 3'UTR of pre-mRNAs. In addition to adenylyltransferase activity, also has uridylyltransferase activity. However, the ATP ratio is higher than UTP in cells, suggesting that it functions primarily as a poly(A) polymerase. This chain is Speckle targeted PIP5K1A-regulated poly(A) polymerase (tut1), found in Danio rerio (Zebrafish).